The following is a 188-amino-acid chain: Elongation factor P (188 aa).

The residue at position 34 (lysine 34) is an N6-(3,6-diaminohexanoyl)-5-hydroxylysine.

This sequence belongs to the elongation factor P family. In terms of processing, may be beta-lysylated on the epsilon-amino group of Lys-34 by the combined action of EpmA and EpmB, and then hydroxylated on the C5 position of the same residue by EpmC (if this protein is present). Lysylation is critical for the stimulatory effect of EF-P on peptide-bond formation. The lysylation moiety may extend toward the peptidyltransferase center and stabilize the terminal 3-CCA end of the tRNA. Hydroxylation of the C5 position on Lys-34 may allow additional potential stabilizing hydrogen-bond interactions with the P-tRNA.

Its subcellular location is the cytoplasm. Its pathway is protein biosynthesis; polypeptide chain elongation. In terms of biological role, involved in peptide bond synthesis. Alleviates ribosome stalling that occurs when 3 or more consecutive Pro residues or the sequence PPG is present in a protein, possibly by augmenting the peptidyl transferase activity of the ribosome. Modification of Lys-34 is required for alleviation. This Vibrio vulnificus (strain CMCP6) protein is Elongation factor P.